Consider the following 486-residue polypeptide: MELLSYEKLMIGDELNKDSVKVRIVLCSNSKEGVGIMADEKSPGHQNFLSRLDAKGHVGEAYVLLEGNGEVTVFVGIGNVEEDILLVKNNARKAGASAYKCVSQFKNMEMSLTSEYMAREVVSGIMLASYKYRFLHKEKDEPSKKIAINSQSHAVKKAVVVGNAQNFARFLGDTPANLMNPTLFVEYATKYLQDKKNVTFEVFDKSFMERKSMNLLLGVSQGSAQEPKLLVARYRGKSGDAVDIALVGKGVCFDSGGISLKPSARMHRMKGDMLGAASVLSVFGLAADMGIKINMNLVIPLVENLPSGTATKPGDVHVGMNGKSVEINNTDAEGRLILADALVYAQEANPTYIVDVATLTGAMMIALGDAFIGYFTADDDLSKIIHQSGIDANDPVWRMPLSQLYLPSMKSNVADLKNAVEGGHGGSATAAIFLSEFVGKEFKWAHFDIAGVMDSNNNKGVYGDGATGCGVPVLIEMIEKLSTIIN.

The Zn(2+) site is built by Lys-249 and Asp-254. Lys-261 is a catalytic residue. Zn(2+) is bound by residues Asp-272, Asp-331, and Glu-333. Residue Arg-335 is part of the active site.

It belongs to the peptidase M17 family. As to quaternary structure, homohexamer. It depends on Zn(2+) as a cofactor.

The protein localises to the cytoplasm. It catalyses the reaction Release of an N-terminal amino acid, Xaa-|-Yaa-, in which Xaa is preferably Leu, but may be other amino acids including Pro although not Arg or Lys, and Yaa may be Pro. Amino acid amides and methyl esters are also readily hydrolyzed, but rates on arylamides are exceedingly low.. The enzyme catalyses Release of N-terminal proline from a peptide.. Its function is as follows. Presumably involved in the processing and regular turnover of intracellular proteins. Catalyzes the removal of unsubstituted N-terminal amino acids from various peptides. In Encephalitozoon cuniculi (strain GB-M1) (Microsporidian parasite), this protein is Cytosol aminopeptidase.